A 397-amino-acid chain; its full sequence is DNA excision repair protein ERCC-8 (397 aa).

5 WD repeats span residues 41-81 (IHCS…RQPY), 97-137 (VHKY…IADV), 184-224 (GHRQ…GCLI), 243-282 (AHNG…NTLV), and 332-371 (GHYK…SVPD). The segment at 370–397 (PDDDDETSTRSQLNPAFEDAWSSSDEEG) is disordered. Phosphoserine occurs at positions 391, 392, and 393.

Part of the CSA complex (also named DCX(ERCC8) complex), a DCX E3 ubiquitin-protein ligase complex containing ERCC8, RBX1, DDB1 and CUL4A; the CSA complex interacts with RNA polymerase II; upon UV irradiation it interacts with the COP9 signalosome and preferentially with the hyperphosphorylated form of RNA polymerase II. Interacts with ERCC6/CSB (via CIM motif); promoting recruitment to lesion-stalled RNA polymerase II (Pol II). Interacts with KIAA1530/UVSSA. Interacts with a subunit of RNA polymerase II TFIIH.

Its subcellular location is the nucleus. The protein localises to the chromosome. It localises to the nucleus matrix. It participates in protein modification; protein ubiquitination. Substrate-recognition component of the CSA complex, a DCX (DDB1-CUL4-X-box) E3 ubiquitin-protein ligase complex, involved in transcription-coupled nucleotide excision repair (TC-NER), a process during which RNA polymerase II-blocking lesions are rapidly removed from the transcribed strand of active genes. Following recruitment to lesion-stalled RNA polymerase II (Pol II), the CSA complex mediates ubiquitination of Pol II subunit POLR2A/RPB1 at 'Lys-1268', a critical TC-NER checkpoint, governing RNA Pol II stability and initiating DNA damage excision by TFIIH recruitment. The CSA complex also promotes the ubiquitination and subsequent proteasomal degradation of ERCC6/CSB in a UV-dependent manner; ERCC6 degradation is essential for the recovery of RNA synthesis after transcription-coupled repair. Also plays a role in DNA double-strand breaks (DSSBs) repair by non-homologous end joining (NHEJ). This chain is DNA excision repair protein ERCC-8 (ERCC8), found in Bos taurus (Bovine).